A 224-amino-acid polypeptide reads, in one-letter code: Deoxyribose-phosphate aldolase (224 aa).

D92 functions as the Proton donor/acceptor in the catalytic mechanism. K154 functions as the Schiff-base intermediate with acetaldehyde in the catalytic mechanism. The active-site Proton donor/acceptor is the K183.

The protein belongs to the DeoC/FbaB aldolase family. DeoC type 1 subfamily.

It is found in the cytoplasm. The enzyme catalyses 2-deoxy-D-ribose 5-phosphate = D-glyceraldehyde 3-phosphate + acetaldehyde. Its pathway is carbohydrate degradation; 2-deoxy-D-ribose 1-phosphate degradation; D-glyceraldehyde 3-phosphate and acetaldehyde from 2-deoxy-alpha-D-ribose 1-phosphate: step 2/2. Its function is as follows. Catalyzes a reversible aldol reaction between acetaldehyde and D-glyceraldehyde 3-phosphate to generate 2-deoxy-D-ribose 5-phosphate. The polypeptide is Deoxyribose-phosphate aldolase (Histophilus somni (strain 129Pt) (Haemophilus somnus)).